A 254-amino-acid polypeptide reads, in one-letter code: Imidazole glycerol phosphate synthase subunit HisF (254 aa).

Active-site residues include aspartate 13 and aspartate 132.

It belongs to the HisA/HisF family. Heterodimer of HisH and HisF.

Its subcellular location is the cytoplasm. The catalysed reaction is 5-[(5-phospho-1-deoxy-D-ribulos-1-ylimino)methylamino]-1-(5-phospho-beta-D-ribosyl)imidazole-4-carboxamide + L-glutamine = D-erythro-1-(imidazol-4-yl)glycerol 3-phosphate + 5-amino-1-(5-phospho-beta-D-ribosyl)imidazole-4-carboxamide + L-glutamate + H(+). It participates in amino-acid biosynthesis; L-histidine biosynthesis; L-histidine from 5-phospho-alpha-D-ribose 1-diphosphate: step 5/9. In terms of biological role, IGPS catalyzes the conversion of PRFAR and glutamine to IGP, AICAR and glutamate. The HisF subunit catalyzes the cyclization activity that produces IGP and AICAR from PRFAR using the ammonia provided by the HisH subunit. This Sulfurovum sp. (strain NBC37-1) protein is Imidazole glycerol phosphate synthase subunit HisF.